A 519-amino-acid polypeptide reads, in one-letter code: uncharacterized protein (519 aa).

It belongs to the glycogen phosphorylase family.

This is an uncharacterized protein from Methanocaldococcus jannaschii (strain ATCC 43067 / DSM 2661 / JAL-1 / JCM 10045 / NBRC 100440) (Methanococcus jannaschii).